Reading from the N-terminus, the 1452-residue chain is Protein clueless (1452 aa).

2 disordered regions span residues 1-93 (MALE…SNGH) and 266-288 (KKTR…VSEP). Over residues 8-24 (KNSNATATSDATATKAS) the composition is skewed to low complexity. The segment covering 42 to 59 (PIPNSNHQNSNQNLVNGN) has biased composition (polar residues). The span at 68–77 (AKKKGKKNRN) shows a compositional bias: basic residues. Serine 272 bears the Phosphoserine mark. A Clu domain is found at 426-668 (RAEDAFSSKL…RTFPPDVNFL (243 aa)). Disordered regions lie at residues 726–775 (KQSE…GDTK), 962–1013 (AVSS…SSVS), and 1414–1452 (ANNN…ATSS). Basic and acidic residues predominate over residues 750–766 (GADKTDVKEEKNEENEK). Residues 970 to 985 (KKRGNGGKHNKHKSSK) are compositionally biased toward basic residues. Residues 990 to 1013 (QQQQQATGNQNGSSSGSSNGSSVS) are compositionally biased toward low complexity. The span at 1423–1433 (AVPKDVEEQKE) shows a compositional bias: basic and acidic residues.

The protein belongs to the CLU family.

The protein localises to the cytoplasm. Functionally, mRNA-binding protein involved in proper cytoplasmic distribution of mitochondria. The polypeptide is Protein clueless (Drosophila erecta (Fruit fly)).